An 815-amino-acid polypeptide reads, in one-letter code: Echinoderm microtubule-associated protein-like 1 (815 aa).

Residues 31-72 (SMEVTDRIASLEQRVQMQEDDIQLLKSALADVVRRLNITEEQ) are a coiled coil. Positions 77 to 179 (NRKGPTKARP…NSESKPKEPV (103 aa)) are disordered. The segment covering 92 to 101 (PLRTTVNNGT) has biased composition (polar residues). Serine 113 carries the post-translational modification Phosphoserine. Residues 126–138 (TKSNIKRTSSSER) show a composition bias toward polar residues. Residues 143–153 (GRRESNGDSRG) show a composition bias toward basic and acidic residues. Positions 156 to 168 (NRTGSTSSSSSGK) are enriched in low complexity. The interval 176-815 (KEPVFSAEEG…DTSIMQWRVI (640 aa)) is tandem atypical propeller in EMLs. WD repeat units follow at residues 261 to 310 (EQLQ…IWDS), 315 to 358 (TLHV…VWDW), 363 to 400 (KLADVKCSNEAVFAADFHPTDTNIIVTCGKSHLYFWTL), 409 to 446 (QGLFEKQEKPKFVLCVTFSENGDTITGDSSGNILVWGK), 450 to 489 (RISYAVQGAHEGGIFALCMLRDGTLVSGGGKDRKLISWSG), 493 to 530 (KLRKTEIPEQFGPIRTVAEGKGDVILIGTTRNFVLQGT), 535 to 572 (FTPITQGHTDELWGLAIHASKSQFLTCGHDKHATLWDA), 578 to 613 (VWDKIIEDPAQSSGFHPSGSVVAVGTLTGRWFVFDT), 617 to 655 (DLVTVHTDGNEQLSVMRYSPDGNFLAIGSHDNCIYIYGV), 664 to 701 (RVGKCSGHSSFITHLDWSVNSQFLVSNSGDYEILYWVP), 709 to 768 (SVET…LFSY), and 775 to 814 (APSHIYGGHSSHVTNVDFLCEDSHLISTGGKDTSIMQWRV).

The protein belongs to the WD repeat EMAP family. Homotrimer; self-association is mediated by the N-terminal coiled coil. Does not interact with EML3. Binds repolymerizing microtubules. Binds unpolymerized tubulins via its WD repeat region. Interacts with TASOR. As to expression, ubiquitous; expressed in most tissues with the exception of thymus and peripheral blood lymphocytes.

It localises to the cytoplasm. It is found in the perinuclear region. The protein resides in the cytoskeleton. In terms of biological role, modulates the assembly and organization of the microtubule cytoskeleton, and probably plays a role in regulating the orientation of the mitotic spindle and the orientation of the plane of cell division. Required for normal proliferation of neuronal progenitor cells in the developing brain and for normal brain development. Does not affect neuron migration per se. This chain is Echinoderm microtubule-associated protein-like 1 (EML1), found in Homo sapiens (Human).